The chain runs to 123 residues: NLLQFNKMILKETGKNAIPFYAFYGCYCGWGGRGKPKDKTDDRCCFVHDCCYGKLTGCPKWDIYPYSLKSGYITCGKGTWCEEQICECDRAAAICFRENLDTYNKYGYMFYPDSRCKGPSEQC.

7 disulfide bridges follow: cysteine 26-cysteine 116, cysteine 28-cysteine 45, cysteine 44-cysteine 95, cysteine 50-cysteine 123, cysteine 51-cysteine 88, cysteine 58-cysteine 81, and cysteine 75-cysteine 86. Ca(2+) is bound by residues tyrosine 27, glycine 29, and glycine 31. Histidine 48 is an active-site residue. Ca(2+) is bound at residue aspartate 49. Residue aspartate 89 is part of the active site.

In terms of assembly, monomer. It depends on Ca(2+) as a cofactor. In terms of tissue distribution, expressed by the venom gland.

Its subcellular location is the secreted. The catalysed reaction is a 1,2-diacyl-sn-glycero-3-phosphocholine + H2O = a 1-acyl-sn-glycero-3-phosphocholine + a fatty acid + H(+). Its activity is regulated as follows. P-bromophenacyl bromide (BPB) completely inhibits the catalytic and edematogenic activities. Enzymatic activity is also diminished by EDTA, heparin and crotapotins F2 and F3 from C.d.collilineatus. Inhibited by divalent cations different from calcium ions (cadmium, magnesium, manganese, zinc), since they act as competitive antagonists of this cofactor. Snake venom phospholipase A2 (PLA2) that induces myotoxicity and local edema in mice. In addition, it causes neuromuscular blockade in avian neuromuscular preparations with a significant direct action on skeletal muscle function. Myotoxic action is exerted by both enzymatic and non-enzymatic mechanisms. PLA2 catalyzes the calcium-dependent hydrolysis of the 2-acyl groups in 3-sn-phosphoglycerides. This chain is Basic myotoxic phospholipase A2 PhTX-II, found in Bothrocophias hyoprora (Amazonian hognose viper).